The sequence spans 678 residues: Photosystem I P700 chlorophyll a apoprotein A1 (678 aa).

Transmembrane regions (helical) follow at residues 75–98 (VFAA…FHGA), 152–175 (LKVI…FHMH), 192–216 (STHH…HISL), 266–284 (SAMH…SVLG), 302–325 (WHLV…QMSN), 341–367 (VSLF…IGLV), 384–406 (IILG…LYVH), and 458–476 (FMVT…LILV). Cysteine 500 and cysteine 509 together coordinate [4Fe-4S] cluster. The next 2 membrane-spanning stretches (helical) occupy residues 516–537 (HVFL…HFFW) and 591–613 (LAAY…MFLF). A chlorophyll a'-binding site is contributed by histidine 602. Residues methionine 610 and tyrosine 618 each contribute to the chlorophyll a site. Tryptophan 619 is a phylloquinone binding site. Residues 651–671 (AVGFTHYLLGGIGSTWSFFLA) form a helical membrane-spanning segment.

The protein belongs to the PsaA/PsaB family. The PsaA/B heterodimer binds the P700 chlorophyll special pair and subsequent electron acceptors. PSI consists of a core antenna complex that captures photons, and an electron transfer chain that converts photonic excitation into a charge separation. The eukaryotic PSI reaction center is composed of at least 11 subunits. P700 is a chlorophyll a/chlorophyll a' dimer, A0 is one or more chlorophyll a, A1 is one or both phylloquinones and FX is a shared 4Fe-4S iron-sulfur center. serves as cofactor.

The protein resides in the plastid. It localises to the chloroplast thylakoid membrane. The catalysed reaction is reduced [plastocyanin] + hnu + oxidized [2Fe-2S]-[ferredoxin] = oxidized [plastocyanin] + reduced [2Fe-2S]-[ferredoxin]. Its function is as follows. PsaA and PsaB bind P700, the primary electron donor of photosystem I (PSI), as well as the electron acceptors A0, A1 and FX. PSI is a plastocyanin/cytochrome c6-ferredoxin oxidoreductase, converting photonic excitation into a charge separation, which transfers an electron from the donor P700 chlorophyll pair to the spectroscopically characterized acceptors A0, A1, FX, FA and FB in turn. Oxidized P700 is reduced on the lumenal side of the thylakoid membrane by plastocyanin or cytochrome c6. The chain is Photosystem I P700 chlorophyll a apoprotein A1 from Amphidinium carterae (Dinoflagellate).